The sequence spans 134 residues: uncharacterized protein (134 aa).

This is an uncharacterized protein from Thermoproteus tenax virus 1 (strain KRA1) (TTV1).